The chain runs to 861 residues: Leucine--tRNA ligase (861 aa).

Residues proline 42–histidine 52 carry the 'HIGH' region motif. The 'KMSKS' region motif lies at lysine 619–serine 623. Lysine 622 lines the ATP pocket.

The protein belongs to the class-I aminoacyl-tRNA synthetase family.

The protein resides in the cytoplasm. It catalyses the reaction tRNA(Leu) + L-leucine + ATP = L-leucyl-tRNA(Leu) + AMP + diphosphate. The polypeptide is Leucine--tRNA ligase (Haemophilus influenzae (strain PittEE)).